Reading from the N-terminus, the 205-residue chain is High frequency lysogenization protein HflD homolog (205 aa).

The protein belongs to the HflD family.

The protein resides in the cytoplasm. It is found in the cell inner membrane. The polypeptide is High frequency lysogenization protein HflD homolog (Shewanella halifaxensis (strain HAW-EB4)).